A 399-amino-acid polypeptide reads, in one-letter code: Phospholipase C (399 aa).

An N-terminal signal peptide occupies residues 1–28 (MNKKKILKFICSAVLSFTLFSGYKSYAW). Zn(2+) is bound by residues W28, H38, D83, H95, H153, D157, H163, H175, and E179. Residues 29–277 (DGKVDGTGTH…NEVSGTINTT (249 aa)) enclose the Zn-dependent PLC domain. Positions 275 to 282 (NTTENSKI) are linker. A PLAT domain is found at 283 to 399 (NEIMVVIKTA…DNKTFYINNK (117 aa)). Ca(2+)-binding residues include G298, T299, D300, D320, N321, G323, N324, D325, and D363.

Belongs to the bacterial zinc-metallophospholipase C family. It depends on Ca(2+) as a cofactor. Requires Zn(2+) as cofactor.

It is found in the secreted. It catalyses the reaction a 1,2-diacyl-sn-glycero-3-phosphocholine + H2O = phosphocholine + a 1,2-diacyl-sn-glycerol + H(+). In terms of biological role, bacterial hemolysins are exotoxins that attack blood cell membranes and cause cell rupture. Binds to eukaryotic membranes where it hydrolyzes phosphatidylcholine, sphingomyelin and phosphatidylethanolamine. The diacylglycerol produced can activate both the arachidonic acid pathway, leading to modulation of the inflammatory response cascade and thrombosis, and protein kinase C, leading to activation of eukaryotic phospholipases and further membrane damage. The protein is Phospholipase C (plc) of Clostridium haemolyticum.